A 342-amino-acid polypeptide reads, in one-letter code: Inactive chitinase-like protein 2 (342 aa).

Residues Met-1–Ala-19 form the signal peptide. The Chitin-binding type-1 domain maps to Glu-20 to Gly-60. Disulfide bonds link Cys-22–Cys-37, Cys-31–Cys-43, Cys-36–Cys-80, Cys-84–Cys-88, Cys-122–Cys-184, Cys-196–Cys-204, and Cys-301–Cys-333.

The protein belongs to the glycosyl hydrolase 19 family. Chitinase class I subfamily.

Inactive chitinase-like protein that does not exhibit hydrolytic activity toward chitin. Binds strongly to chitin and possesses antifungal activity toward the fungal pathogen Altenaria alternata in plate assays. Probably involved in defense against fungal pathogens through a mechanism that only involves carbohydrate binding. This chain is Inactive chitinase-like protein 2, found in Hevea brasiliensis (Para rubber tree).